We begin with the raw amino-acid sequence, 382 residues long: UDP-N-acetylenolpyruvoylglucosamine reductase (382 aa).

Positions 50 to 253 (RVGGPAVLAE…REAVLRLRAS (204 aa)) constitute an FAD-binding PCMH-type domain. Arg-193 is a catalytic residue. Ser-270 functions as the Proton donor in the catalytic mechanism. The active site involves Glu-374.

It belongs to the MurB family. The cofactor is FAD.

Its subcellular location is the cytoplasm. The catalysed reaction is UDP-N-acetyl-alpha-D-muramate + NADP(+) = UDP-N-acetyl-3-O-(1-carboxyvinyl)-alpha-D-glucosamine + NADPH + H(+). The protein operates within cell wall biogenesis; peptidoglycan biosynthesis. Functionally, cell wall formation. The sequence is that of UDP-N-acetylenolpyruvoylglucosamine reductase from Nocardia farcinica (strain IFM 10152).